Reading from the N-terminus, the 505-residue chain is Deoxyguanosinetriphosphate triphosphohydrolase (505 aa).

The 208-residue stretch at 66-273 folds into the HD domain; it reads RLTHSMEVQQ…MEAADDISYC (208 aa).

Belongs to the dGTPase family. Type 1 subfamily. Homotetramer. It depends on Mg(2+) as a cofactor.

It carries out the reaction dGTP + H2O = 2'-deoxyguanosine + triphosphate + H(+). Functionally, dGTPase preferentially hydrolyzes dGTP over the other canonical NTPs. The protein is Deoxyguanosinetriphosphate triphosphohydrolase of Escherichia coli O17:K52:H18 (strain UMN026 / ExPEC).